Here is a 190-residue protein sequence, read N- to C-terminus: Holliday junction branch migration complex subunit RuvA (190 aa).

Residues methionine 1 to isoleucine 65 form a domain I region. The tract at residues serine 66–histidine 143 is domain II. The tract at residues proline 144 to glutamate 147 is flexible linker. The interval glutamate 147–leucine 190 is domain III.

It belongs to the RuvA family. As to quaternary structure, homotetramer. Forms an RuvA(8)-RuvB(12)-Holliday junction (HJ) complex. HJ DNA is sandwiched between 2 RuvA tetramers; dsDNA enters through RuvA and exits via RuvB. An RuvB hexamer assembles on each DNA strand where it exits the tetramer. Each RuvB hexamer is contacted by two RuvA subunits (via domain III) on 2 adjacent RuvB subunits; this complex drives branch migration. In the full resolvosome a probable DNA-RuvA(4)-RuvB(12)-RuvC(2) complex forms which resolves the HJ.

Its subcellular location is the cytoplasm. Its function is as follows. The RuvA-RuvB-RuvC complex processes Holliday junction (HJ) DNA during genetic recombination and DNA repair, while the RuvA-RuvB complex plays an important role in the rescue of blocked DNA replication forks via replication fork reversal (RFR). RuvA specifically binds to HJ cruciform DNA, conferring on it an open structure. The RuvB hexamer acts as an ATP-dependent pump, pulling dsDNA into and through the RuvAB complex. HJ branch migration allows RuvC to scan DNA until it finds its consensus sequence, where it cleaves and resolves the cruciform DNA. The polypeptide is Holliday junction branch migration complex subunit RuvA (Wolbachia pipientis wMel).